We begin with the raw amino-acid sequence, 911 residues long: Isoleucine--tRNA ligase (911 aa).

Residues 57 to 67 (PYANGHIHIGH) carry the 'HIGH' region motif. Glutamate 564 is a binding site for L-isoleucyl-5'-AMP. Positions 605–609 (KMSKS) match the 'KMSKS' region motif. An ATP-binding site is contributed by lysine 608. 4 residues coordinate Zn(2+): cysteine 887, cysteine 890, cysteine 902, and cysteine 905.

The protein belongs to the class-I aminoacyl-tRNA synthetase family. IleS type 1 subfamily. Monomer. Requires Zn(2+) as cofactor.

Its subcellular location is the cytoplasm. The enzyme catalyses tRNA(Ile) + L-isoleucine + ATP = L-isoleucyl-tRNA(Ile) + AMP + diphosphate. Functionally, catalyzes the attachment of isoleucine to tRNA(Ile). As IleRS can inadvertently accommodate and process structurally similar amino acids such as valine, to avoid such errors it has two additional distinct tRNA(Ile)-dependent editing activities. One activity is designated as 'pretransfer' editing and involves the hydrolysis of activated Val-AMP. The other activity is designated 'posttransfer' editing and involves deacylation of mischarged Val-tRNA(Ile). The polypeptide is Isoleucine--tRNA ligase (Nautilia profundicola (strain ATCC BAA-1463 / DSM 18972 / AmH)).